A 212-amino-acid polypeptide reads, in one-letter code: Protein GET1 (212 aa).

Topologically, residues 1 to 4 (MASL) are lumenal. A helical membrane pass occupies residues 5-24 (LLFVLVIQIITYLINTIGAR). Over 25-110 (TIDSLLWLLY…SFDWTIKTVR (86 aa)) the chain is Cytoplasmic. The stretch at 75–99 (AKLRRRHDKAMEEYDVKNKKLSALK) forms a coiled coil. The helical transmembrane segment at 111-131 (WVSTTGVTVILQFWFSKSPIF) threads the bilayer. Over 132 to 155 (DLPRGWLPWQVEWILSFPRAPLGT) the chain is Lumenal. The helical transmembrane segment at 156-172 (VSIQVWGGACGTVIALV) threads the bilayer. At 173 to 212 (GGAMGVAAPAFKKINQPRGEAQKMGTPRGSREQTPVRKTQ) the chain is on the cytoplasmic side. The tract at residues 189–212 (PRGEAQKMGTPRGSREQTPVRKTQ) is disordered. Positions 201-212 (GSREQTPVRKTQ) are enriched in basic and acidic residues.

This sequence belongs to the WRB/GET1 family. In terms of assembly, interacts with GET3.

It is found in the endoplasmic reticulum membrane. In terms of biological role, required for the post-translational delivery of tail-anchored (TA) proteins to the endoplasmic reticulum. Acts as a membrane receptor for soluble GET3, which recognizes and selectively binds the transmembrane domain of TA proteins in the cytosol. This Arthroderma otae (strain ATCC MYA-4605 / CBS 113480) (Microsporum canis) protein is Protein GET1.